We begin with the raw amino-acid sequence, 172 residues long: Adenine phosphoribosyltransferase (172 aa).

It belongs to the purine/pyrimidine phosphoribosyltransferase family. As to quaternary structure, homodimer.

The protein resides in the cytoplasm. It carries out the reaction AMP + diphosphate = 5-phospho-alpha-D-ribose 1-diphosphate + adenine. It functions in the pathway purine metabolism; AMP biosynthesis via salvage pathway; AMP from adenine: step 1/1. In terms of biological role, catalyzes a salvage reaction resulting in the formation of AMP, that is energically less costly than de novo synthesis. The protein is Adenine phosphoribosyltransferase of Streptococcus pyogenes serotype M12 (strain MGAS9429).